We begin with the raw amino-acid sequence, 185 residues long: Mu-like prophage FluMu protein gp16 (185 aa).

It to phage Mu protein gp16.

The sequence is that of Mu-like prophage FluMu protein gp16 from Haemophilus influenzae (strain ATCC 51907 / DSM 11121 / KW20 / Rd).